The chain runs to 459 residues: Exodeoxyribonuclease 7 large subunit (459 aa).

Belongs to the XseA family. In terms of assembly, heterooligomer composed of large and small subunits.

The protein localises to the cytoplasm. The enzyme catalyses Exonucleolytic cleavage in either 5'- to 3'- or 3'- to 5'-direction to yield nucleoside 5'-phosphates.. In terms of biological role, bidirectionally degrades single-stranded DNA into large acid-insoluble oligonucleotides, which are then degraded further into small acid-soluble oligonucleotides. This chain is Exodeoxyribonuclease 7 large subunit, found in Yersinia pseudotuberculosis serotype IB (strain PB1/+).